The sequence spans 413 residues: S-adenosylmethionine synthase (413 aa).

His-15 serves as a coordination point for ATP. A Mg(2+)-binding site is contributed by Asp-17. Position 43 (Glu-43) interacts with K(+). L-methionine-binding residues include Glu-56 and Gln-100. The segment at 100 to 110 (QSPDISQGVNE) is flexible loop. ATP is bound by residues 171 to 173 (DGK), 248 to 249 (KF), Asp-257, 263 to 264 (RK), Ala-280, and Lys-284. Asp-257 contributes to the L-methionine binding site. Lys-288 is a binding site for L-methionine.

The protein belongs to the AdoMet synthase family. In terms of assembly, homotetramer; dimer of dimers. Mg(2+) is required as a cofactor. K(+) serves as cofactor.

The protein resides in the cytoplasm. The catalysed reaction is L-methionine + ATP + H2O = S-adenosyl-L-methionine + phosphate + diphosphate. It participates in amino-acid biosynthesis; S-adenosyl-L-methionine biosynthesis; S-adenosyl-L-methionine from L-methionine: step 1/1. Catalyzes the formation of S-adenosylmethionine (AdoMet) from methionine and ATP. The overall synthetic reaction is composed of two sequential steps, AdoMet formation and the subsequent tripolyphosphate hydrolysis which occurs prior to release of AdoMet from the enzyme. The protein is S-adenosylmethionine synthase of Prochlorococcus marinus (strain MIT 9215).